Reading from the N-terminus, the 628-residue chain is Chaperone protein DnaK (628 aa).

Thr197 is subject to Phosphothreonine; by autocatalysis. The span at 595 to 604 shows a compositional bias: basic and acidic residues; sequence AEAMYKKEQG. The disordered stretch occupies residues 595 to 628; it reads AEAMYKKEQGEQAGAQPNQKAKKDDDDVIDAEVE.

Belongs to the heat shock protein 70 family.

Acts as a chaperone. In Aliarcobacter butzleri (strain RM4018) (Arcobacter butzleri), this protein is Chaperone protein DnaK.